We begin with the raw amino-acid sequence, 522 residues long: Thiamine biosynthetic bifunctional enzyme TH1, chloroplastic (522 aa).

Residues 1–36 (MNSLGGIRSWPANWRSTTASMTTTESVRKVPQVLTV) constitute a chloroplast transit peptide. 4-amino-2-methyl-5-(diphosphooxymethyl)pyrimidine is bound by residues 345 to 349 (QLREK) and Asn377. Residues Asp378 and Asp397 each contribute to the Mg(2+) site. Residue Ser416 coordinates 4-amino-2-methyl-5-(diphosphooxymethyl)pyrimidine. Residue 442–444 (TNT) coordinates 2-[(2R,5Z)-2-carboxy-4-methylthiazol-5(2H)-ylidene]ethyl phosphate. Lys445 lines the 4-amino-2-methyl-5-(diphosphooxymethyl)pyrimidine pocket. Residues Gly472 and 495 to 496 (VS) each bind 2-[(2R,5Z)-2-carboxy-4-methylthiazol-5(2H)-ylidene]ethyl phosphate.

The protein belongs to the thiamine-phosphate synthase family. Mg(2+) is required as a cofactor.

It localises to the plastid. It is found in the chloroplast. The catalysed reaction is 2-[(2R,5Z)-2-carboxy-4-methylthiazol-5(2H)-ylidene]ethyl phosphate + 4-amino-2-methyl-5-(diphosphooxymethyl)pyrimidine + 2 H(+) = thiamine phosphate + CO2 + diphosphate. The enzyme catalyses 2-(2-carboxy-4-methylthiazol-5-yl)ethyl phosphate + 4-amino-2-methyl-5-(diphosphooxymethyl)pyrimidine + 2 H(+) = thiamine phosphate + CO2 + diphosphate. It carries out the reaction 4-methyl-5-(2-phosphooxyethyl)-thiazole + 4-amino-2-methyl-5-(diphosphooxymethyl)pyrimidine + H(+) = thiamine phosphate + diphosphate. It catalyses the reaction 4-amino-5-hydroxymethyl-2-methylpyrimidine + ATP = 4-amino-2-methyl-5-(phosphooxymethyl)pyrimidine + ADP + H(+). It participates in cofactor biosynthesis; thiamine diphosphate biosynthesis; thiamine phosphate from 4-amino-2-methyl-5-diphosphomethylpyrimidine and 4-methyl-5-(2-phosphoethyl)-thiazole: step 1/1. Its pathway is cofactor biosynthesis; thiamine diphosphate biosynthesis; 4-amino-2-methyl-5-diphosphomethylpyrimidine from 5-amino-1-(5-phospho-D-ribosyl)imidazole: step 2/3. Functionally, essential for thiamine biosynthesis. Bifunctional enzyme that catalyzes the phosphorylation of hydroxymethylpyrimidine phosphate (HMP-P) to HMP-PP and condenses 4-methyl-5-(beta-hydroxyethyl)thiazole monophosphate (THZ-P) and 2-methyl-4-amino-5-hydroxymethyl pyrimidine pyrophosphate (HMP-PP) to form thiamine monophosphate (TMP). The chain is Thiamine biosynthetic bifunctional enzyme TH1, chloroplastic (TH1) from Arabidopsis thaliana (Mouse-ear cress).